A 149-amino-acid polypeptide reads, in one-letter code: Nucleoside diphosphate kinase 1 (149 aa).

ATP-binding residues include lysine 9, phenylalanine 57, arginine 85, threonine 91, arginine 102, and asparagine 112. The active-site Pros-phosphohistidine intermediate is the histidine 115.

Belongs to the NDK family. Homohexamer. Requires Mg(2+) as cofactor.

The catalysed reaction is a 2'-deoxyribonucleoside 5'-diphosphate + ATP = a 2'-deoxyribonucleoside 5'-triphosphate + ADP. It carries out the reaction a ribonucleoside 5'-diphosphate + ATP = a ribonucleoside 5'-triphosphate + ADP. Major role in the synthesis of nucleoside triphosphates other than ATP. The ATP gamma phosphate is transferred to the NDP beta phosphate via a ping-pong mechanism, using a phosphorylated active-site intermediate. This NDK is microtubule-associated. In Oryza sativa subsp. japonica (Rice), this protein is Nucleoside diphosphate kinase 1 (NDKR).